A 33-amino-acid chain; its full sequence is Cytochrome b6-f complex subunit 8 (33 aa).

The helical transmembrane segment at 2–22 threads the bilayer; that stretch reads LITLGWASLAALFSFSIAMVV.

Belongs to the PetN family. As to quaternary structure, the 4 large subunits of the cytochrome b6-f complex are cytochrome b6, subunit IV (17 kDa polypeptide, PetD), cytochrome f and the Rieske protein, while the 4 small subunits are PetG, PetL, PetM and PetN. The complex functions as a dimer.

It localises to the plastid. The protein resides in the organellar chromatophore thylakoid membrane. Functionally, component of the cytochrome b6-f complex, which mediates electron transfer between photosystem II (PSII) and photosystem I (PSI), cyclic electron flow around PSI, and state transitions. This is Cytochrome b6-f complex subunit 8 from Paulinella chromatophora.